Reading from the N-terminus, the 393-residue chain is Pyridoxamine--pyruvate transaminase (393 aa).

3 residues coordinate pyridoxal 5'-phosphate: E68, Y95, and T146. The residue at position 197 (K197) is an N6-(pyridoxal phosphate)lysine. Residue R345 coordinates pyridoxal 5'-phosphate.

The protein belongs to the class-V pyridoxal-phosphate-dependent aminotransferase family. In terms of assembly, homotetramer. Requires pyridoxal 5'-phosphate as cofactor.

It catalyses the reaction pyridoxamine + pyruvate = pyridoxal + L-alanine. Its function is as follows. Catalyzes a reversible transamination reaction between pyridoxamine and pyruvate to form pyridoxal and L-alanine. This is Pyridoxamine--pyruvate transaminase (ppaT) from Mesorhizobium japonicum (strain LMG 29417 / CECT 9101 / MAFF 303099) (Mesorhizobium loti (strain MAFF 303099)).